The sequence spans 327 residues: D-threonate 4-phosphate dehydrogenase (327 aa).

Substrate is bound by residues H139 and T140. H169, H213, and H268 together coordinate a divalent metal cation. Substrate-binding residues include K276, N285, and R294.

The protein belongs to the PdxA family. PdxA2 subfamily. As to quaternary structure, homodimer. Requires a divalent metal cation as cofactor.

The enzyme catalyses 4-O-phospho-D-threonate + NAD(+) = dihydroxyacetone phosphate + CO2 + NADH. Its function is as follows. Catalyzes the NAD-dependent oxidation and subsequent decarboxylation of D-threonate 4-phosphate to produce dihydroxyacetone phosphate (DHAP). Can also use 4-hydroxy-L-threonine 4-phosphate as substrate. The sequence is that of D-threonate 4-phosphate dehydrogenase from Salmonella typhimurium (strain LT2 / SGSC1412 / ATCC 700720).